The primary structure comprises 251 residues: DNA polymerase sliding clamp 2 (251 aa).

Belongs to the PCNA family. Heterotrimer. The subunits circularize to form a toroid; DNA passes through its center. Replication factor C (RFC) is required to load the toroid on the DNA.

Functionally, sliding clamp subunit that acts as a moving platform for DNA processing. Responsible for tethering the catalytic subunit of DNA polymerase and other proteins to DNA during high-speed replication. The chain is DNA polymerase sliding clamp 2 from Aeropyrum pernix (strain ATCC 700893 / DSM 11879 / JCM 9820 / NBRC 100138 / K1).